Here is a 137-residue protein sequence, read N- to C-terminus: Flavodoxin (137 aa).

Positions 2–137 constitute a Flavodoxin-like domain; it reads VEIVYWSGTG…KELGEAAAKA (136 aa).

The protein belongs to the flavodoxin family. The cofactor is FMN.

Low-potential electron donor to a number of redox enzymes. The protein is Flavodoxin of Megasphaera elsdenii.